We begin with the raw amino-acid sequence, 242 residues long: ATP synthase subunit a (242 aa).

A run of 6 helical transmembrane segments spans residues 29 to 49, 84 to 104, 114 to 134, 140 to 160, 181 to 201, and 203 to 223; these read SSIY…LAFY, FIPL…LGMT, IIVT…VGFV, FLTL…MIVI, MAGH…MIYL, and FLPI…AILQ.

The protein belongs to the ATPase A chain family. As to quaternary structure, F-type ATPases have 2 components, CF(1) - the catalytic core - and CF(0) - the membrane proton channel. CF(1) has five subunits: alpha(3), beta(3), gamma(1), delta(1), epsilon(1). CF(0) has three main subunits: a(1), b(2) and c(9-12). The alpha and beta chains form an alternating ring which encloses part of the gamma chain. CF(1) is attached to CF(0) by a central stalk formed by the gamma and epsilon chains, while a peripheral stalk is formed by the delta and b chains.

The protein localises to the cell inner membrane. Key component of the proton channel; it plays a direct role in the translocation of protons across the membrane. The protein is ATP synthase subunit a of Rickettsia conorii (strain ATCC VR-613 / Malish 7).